Here is a 465-residue protein sequence, read N- to C-terminus: Pancreatic triacylglycerol lipase (465 aa).

An N-terminal signal peptide occupies residues 1-16; sequence MLLLWALPLLLGAVAG. Disulfide bonds link cysteine 20-cysteine 26 and cysteine 108-cysteine 119. Serine 170 serves as the catalytic Nucleophile. Aspartate 194 serves as the catalytic Charge relay system. Glutamate 205, arginine 208, aspartate 210, and aspartate 213 together coordinate Ca(2+). Cysteine 255 and cysteine 279 form a disulfide bridge. Histidine 281 serves as the catalytic Charge relay system. Disulfide bonds link cysteine 303-cysteine 314, cysteine 317-cysteine 321, and cysteine 449-cysteine 465. The region spanning 355–465 is the PLAT domain; it reads WRYQVAVTLS…EDILLTLTPC (111 aa).

Belongs to the AB hydrolase superfamily. Lipase family. In terms of assembly, forms a 1:1 stoichiometric complex with (pro)colipase/CLPS.

The protein localises to the secreted. The catalysed reaction is a triacylglycerol + H2O = a diacylglycerol + a fatty acid + H(+). The enzyme catalyses 1,2,3-tributanoylglycerol + H2O = dibutanoylglycerol + butanoate + H(+). It catalyses the reaction 1,2,3-tri-(9Z-octadecenoyl)-glycerol + H2O = di-(9Z)-octadecenoylglycerol + (9Z)-octadecenoate + H(+). It carries out the reaction all-trans-retinyl hexadecanoate + H2O = all-trans-retinol + hexadecanoate + H(+). The catalysed reaction is 1,2-di-(9Z-octadecenoyl)-glycerol + H2O = (9Z-octadecenoyl)-glycerol + (9Z)-octadecenoate + H(+). Its activity is regulated as follows. Inhibited by bile salts, is reactivated by (pro)colipase/CLPS. Plays an important role in fat metabolism. It preferentially splits the esters of long-chain fatty acids at positions 1 and 3, producing mainly 2-monoacylglycerol and free fatty acids, and shows considerably higher activity against insoluble emulsified substrates than against soluble ones. This is Pancreatic triacylglycerol lipase (PNLIP) from Oryctolagus cuniculus (Rabbit).